The primary structure comprises 793 residues: Meiosis-specific protein ASY3 (793 aa).

4 disordered regions span residues 1–40 (MSDY…DKDD), 58–97 (LQAN…RKLG), 110–287 (LSGS…KAGA), and 305–586 (EGLR…KRNS). Positions 7 to 19 (FGSNYHPSSQSRK) are enriched in polar residues. Over residues 60–70 (ANKKEKSDLAA) the composition is skewed to basic and acidic residues. The span at 72–86 (QRNSAQVTGHVTSPW) shows a compositional bias: polar residues. Low complexity predominate over residues 110–122 (LSGSKGLNKGLNG). Polar residues predominate over residues 131–142 (SFQNCPISSPQH). 2 stretches are compositionally biased toward basic and acidic residues: residues 151–165 (RNDR…RMEE) and 177–187 (SQREKMDKPGK). Residues 209-219 (PANNEDVNSET) are compositionally biased toward polar residues. Residues 221–248 (EVEKTNFKLSQDKGSNDDPLIKPRHNSD) are compositionally biased toward basic and acidic residues. The span at 322–341 (KKQRGRRKNTVVKCRKAHSR) shows a compositional bias: basic residues. 4 stretches are compositionally biased toward basic and acidic residues: residues 342–354 (KKDE…KEAS), 363–385 (ESTE…DLHP), 392–407 (QKPD…HPSP), and 424–441 (NGDK…KSVE). Low complexity-rich tracts occupy residues 455-470 (APIS…EASP) and 491-502 (GTKKTSQGTTGQ). Composition is skewed to basic and acidic residues over residues 505–527 (DTEK…RESS) and 541–553 (SDER…REDS). Residues 682 to 745 (SNLAKTKRKH…KGSIKKQRTS (64 aa)) are a coiled coil.

Interacts with ASY1.

It localises to the chromosome. It is found in the nucleus. Its function is as follows. Required for normal meiosis in male and female gametophytes. Acts with ASY1 at the interface between the developing chromosome axes and the recombination machinery to ensure interhomolog recombination. Required for synaptonemal complex formation during meiosis. This Arabidopsis thaliana (Mouse-ear cress) protein is Meiosis-specific protein ASY3.